A 136-amino-acid polypeptide reads, in one-letter code: Late embryogenesis abundant protein D-7 (136 aa).

Disordered regions lie at residues 1–108 (MASH…AQGA) and 117–136 (GMAD…TRKD). The segment covering 11-58 (GRAEGRAHEKGEQMKESMKEKAEAAKQKTMETAEAAKQKTMETAEAAK) has biased composition (basic and acidic residues). 5 LEA 11-mer repeat repeats span residues 31 to 41 (KAEAAKQKTME), 42 to 52 (TAEAAKQKTME), 53 to 63 (TAEAAKQKTRG), 64 to 74 (AAETTNDKTKQ), and 75 to 85 (TAGAARGKAEE).

The protein belongs to the LEA type 4 family.

Functionally, LEA proteins are late embryonic proteins abundant in higher plant seed embryos. There are two subsets of LEA proteins (5a and 5b), the first ones are expressed when the cotyledon weight reach 80 mg and the second set are expressed above 100 mg. The function of those proteins is not known. The protein is Late embryogenesis abundant protein D-7 of Gossypium hirsutum (Upland cotton).